The primary structure comprises 210 residues: Peptidyl-tRNA hydrolase (210 aa).

TRNA is bound at residue Tyr14. The active-site Proton acceptor is His19. TRNA contacts are provided by Phe64, Asn66, and Asn112.

It belongs to the PTH family. As to quaternary structure, monomer.

It localises to the cytoplasm. It catalyses the reaction an N-acyl-L-alpha-aminoacyl-tRNA + H2O = an N-acyl-L-amino acid + a tRNA + H(+). Its function is as follows. Hydrolyzes ribosome-free peptidyl-tRNAs (with 1 or more amino acids incorporated), which drop off the ribosome during protein synthesis, or as a result of ribosome stalling. Functionally, catalyzes the release of premature peptidyl moieties from peptidyl-tRNA molecules trapped in stalled 50S ribosomal subunits, and thus maintains levels of free tRNAs and 50S ribosomes. The sequence is that of Peptidyl-tRNA hydrolase from Methylorubrum populi (strain ATCC BAA-705 / NCIMB 13946 / BJ001) (Methylobacterium populi).